The sequence spans 221 residues: tRNA (guanine-N(7)-)-methyltransferase (221 aa).

The S-adenosyl-L-methionine site is built by glutamate 43, glutamate 68, and aspartate 123. Aspartate 123 is a catalytic residue. Residues lysine 127, aspartate 159, and 199-202 contribute to the substrate site; that span reads TEYE.

Belongs to the class I-like SAM-binding methyltransferase superfamily. TrmB family.

The enzyme catalyses guanosine(46) in tRNA + S-adenosyl-L-methionine = N(7)-methylguanosine(46) in tRNA + S-adenosyl-L-homocysteine. It functions in the pathway tRNA modification; N(7)-methylguanine-tRNA biosynthesis. Catalyzes the formation of N(7)-methylguanine at position 46 (m7G46) in tRNA. In Mycoplasma mycoides subsp. mycoides SC (strain CCUG 32753 / NCTC 10114 / PG1), this protein is tRNA (guanine-N(7)-)-methyltransferase.